Here is a 329-residue protein sequence, read N- to C-terminus: Biotin synthase (329 aa).

Positions 38 to 262 constitute a Radical SAM core domain; sequence NTIQVSTLLS…IMPHSYIRLS (225 aa). The [4Fe-4S] cluster site is built by cysteine 53, cysteine 57, and cysteine 60. [2Fe-2S] cluster-binding residues include cysteine 97, cysteine 128, cysteine 188, and arginine 260.

The protein belongs to the radical SAM superfamily. Biotin synthase family. As to quaternary structure, homodimer. It depends on [4Fe-4S] cluster as a cofactor. [2Fe-2S] cluster serves as cofactor.

The catalysed reaction is (4R,5S)-dethiobiotin + (sulfur carrier)-SH + 2 reduced [2Fe-2S]-[ferredoxin] + 2 S-adenosyl-L-methionine = (sulfur carrier)-H + biotin + 2 5'-deoxyadenosine + 2 L-methionine + 2 oxidized [2Fe-2S]-[ferredoxin]. It participates in cofactor biosynthesis; biotin biosynthesis; biotin from 7,8-diaminononanoate: step 2/2. Catalyzes the conversion of dethiobiotin (DTB) to biotin by the insertion of a sulfur atom into dethiobiotin via a radical-based mechanism. This is Biotin synthase from Acinetobacter baumannii (strain SDF).